Here is a 157-residue protein sequence, read N- to C-terminus: ATP synthase subunit delta (157 aa).

This sequence belongs to the ATPase delta chain family. As to quaternary structure, F-type ATPases have 2 components, F(1) - the catalytic core - and F(0) - the membrane proton channel. F(1) has five subunits: alpha(3), beta(3), gamma(1), delta(1), epsilon(1). F(0) has three main subunits: a(1), b(2) and c(10-14). The alpha and beta chains form an alternating ring which encloses part of the gamma chain. F(1) is attached to F(0) by a central stalk formed by the gamma and epsilon chains, while a peripheral stalk is formed by the delta and b chains.

The protein localises to the cell membrane. Its function is as follows. F(1)F(0) ATP synthase produces ATP from ADP in the presence of a proton or sodium gradient. F-type ATPases consist of two structural domains, F(1) containing the extramembraneous catalytic core and F(0) containing the membrane proton channel, linked together by a central stalk and a peripheral stalk. During catalysis, ATP synthesis in the catalytic domain of F(1) is coupled via a rotary mechanism of the central stalk subunits to proton translocation. This protein is part of the stalk that links CF(0) to CF(1). It either transmits conformational changes from CF(0) to CF(1) or is implicated in proton conduction. The chain is ATP synthase subunit delta from Chloroflexus aggregans (strain MD-66 / DSM 9485).